Here is a 291-residue protein sequence, read N- to C-terminus: Arabinogalactan O-methyltransferase 2 (291 aa).

The helical transmembrane segment at 18–38 (WFLAVALAGLIGGAMLITSFI) threads the bilayer.

The protein belongs to the methyltransferase superfamily.

The protein resides in the golgi apparatus membrane. Functionally, involved in the methylation of glucuronic acid of different plant cell wall component, but mainly on side chains of arabinogalactans. This is Arabinogalactan O-methyltransferase 2 from Arabidopsis thaliana (Mouse-ear cress).